A 189-amino-acid polypeptide reads, in one-letter code: Protein GrpE (189 aa).

A compositionally biased stretch (basic and acidic residues) spans 1-38 (MTKSNETERMEESEETHSSDIRSASESDHASGSDHTES). The segment at 1–54 (MTKSNETERMEESEETHSSDIRSASESDHASGSDHTESADEIPTADAEQGELEQ) is disordered.

Belongs to the GrpE family. Homodimer.

It is found in the cytoplasm. Its function is as follows. Participates actively in the response to hyperosmotic and heat shock by preventing the aggregation of stress-denatured proteins, in association with DnaK and GrpE. It is the nucleotide exchange factor for DnaK and may function as a thermosensor. Unfolded proteins bind initially to DnaJ; upon interaction with the DnaJ-bound protein, DnaK hydrolyzes its bound ATP, resulting in the formation of a stable complex. GrpE releases ADP from DnaK; ATP binding to DnaK triggers the release of the substrate protein, thus completing the reaction cycle. Several rounds of ATP-dependent interactions between DnaJ, DnaK and GrpE are required for fully efficient folding. This Tropheryma whipplei (strain Twist) (Whipple's bacillus) protein is Protein GrpE.